Consider the following 360-residue polypeptide: Fe(3+) ions import ATP-binding protein FbpC (360 aa).

The region spanning 4-236 (LEIKGLHKHY…PKDRMIAEFL (233 aa)) is the ABC transporter domain. Residue 36-43 (GPSGCGKT) participates in ATP binding.

This sequence belongs to the ABC transporter superfamily. Fe(3+) ion importer (TC 3.A.1.10) family. The complex is composed of two ATP-binding proteins (FbpC), two transmembrane proteins (FbpB) and a solute-binding protein (FbpA).

It is found in the cell inner membrane. It carries out the reaction Fe(3+)(out) + ATP + H2O = Fe(3+)(in) + ADP + phosphate + H(+). Its function is as follows. Part of the ABC transporter complex FbpABC involved in Fe(3+) ions import. Responsible for energy coupling to the transport system. In Mesorhizobium japonicum (strain LMG 29417 / CECT 9101 / MAFF 303099) (Mesorhizobium loti (strain MAFF 303099)), this protein is Fe(3+) ions import ATP-binding protein FbpC.